The sequence spans 466 residues: 3-isopropylmalate dehydratase large subunit (466 aa).

[4Fe-4S] cluster contacts are provided by cysteine 347, cysteine 407, and cysteine 410.

This sequence belongs to the aconitase/IPM isomerase family. LeuC type 1 subfamily. As to quaternary structure, heterodimer of LeuC and LeuD. The cofactor is [4Fe-4S] cluster.

It carries out the reaction (2R,3S)-3-isopropylmalate = (2S)-2-isopropylmalate. It participates in amino-acid biosynthesis; L-leucine biosynthesis; L-leucine from 3-methyl-2-oxobutanoate: step 2/4. In terms of biological role, catalyzes the isomerization between 2-isopropylmalate and 3-isopropylmalate, via the formation of 2-isopropylmaleate. In Shigella boydii serotype 4 (strain Sb227), this protein is 3-isopropylmalate dehydratase large subunit.